We begin with the raw amino-acid sequence, 403 residues long: Argininosuccinate synthase (403 aa).

Position 10–18 (10–18 (AYSGGLDTS)) interacts with ATP. Tyr-87 is a binding site for L-citrulline. Gly-117 contributes to the ATP binding site. Thr-119, Asn-123, and Asp-124 together coordinate L-aspartate. Asn-123 contributes to the L-citrulline binding site. Residues Arg-127, Ser-175, Glu-260, and Tyr-272 each contribute to the L-citrulline site.

This sequence belongs to the argininosuccinate synthase family. Type 1 subfamily. Homotetramer.

Its subcellular location is the cytoplasm. It catalyses the reaction L-citrulline + L-aspartate + ATP = 2-(N(omega)-L-arginino)succinate + AMP + diphosphate + H(+). It functions in the pathway amino-acid biosynthesis; L-arginine biosynthesis; L-arginine from L-ornithine and carbamoyl phosphate: step 2/3. This is Argininosuccinate synthase from Bacillus velezensis (strain DSM 23117 / BGSC 10A6 / LMG 26770 / FZB42) (Bacillus amyloliquefaciens subsp. plantarum).